A 301-amino-acid polypeptide reads, in one-letter code: MSCNLLVILGPTASGKTQLGVELARRLSGEIISADSRQVYRGMDIGTGKDLAEYGDIPYHIIDIVDPGFEFNVFEFQRCFQRAFAHIVNRGRLPVMVGGTGMYLEAVLNRYRFVEVPENADLRRELSTFSDEELAERLKGANPRLHNTTDLLERGRLVRAIEIAEYEDSREPLPLPELAPLIFGIRWERPVLRQRITDRLKARLEQGMIDEIEQLHRSGIPYETLEFYGLEYRFVAKYLKGELNRNDMFQKLNSAIHDFAKRQDNWFRRMERHGTVIHWLEGDGDPLKEAQEILRLNAIPR.

10-17 provides a ligand contact to ATP; it reads GPTASGKT. A substrate-binding site is contributed by 12–17; it reads TASGKT. Residues 35-38 are interaction with substrate tRNA; it reads DSRQ.

The protein belongs to the IPP transferase family. In terms of assembly, monomer. Mg(2+) serves as cofactor.

It catalyses the reaction adenosine(37) in tRNA + dimethylallyl diphosphate = N(6)-dimethylallyladenosine(37) in tRNA + diphosphate. Functionally, catalyzes the transfer of a dimethylallyl group onto the adenine at position 37 in tRNAs that read codons beginning with uridine, leading to the formation of N6-(dimethylallyl)adenosine (i(6)A). In Geotalea uraniireducens (strain Rf4) (Geobacter uraniireducens), this protein is tRNA dimethylallyltransferase 1.